A 966-amino-acid chain; its full sequence is MAFANFRRILRLSTFEKRKSREYEHVRRDLDPNDVWEIVGELGDGAFGKVYKAKNKETGALAAAKVIETKSEEELEDYIVEIEILATCDHPYIVKLLGAYYYDGKLWIMIEFCPGGAVDAIMLELDRGLTEPQIQVVCRQMLEALNFLHGKRIIHRDLKAGNVLMTLEGDIRLADFGVSAKNLKTLQKRDSFIGTPYWMAPEVVLCETMKDAPYDYKADIWSLGITLIEMAQIEPPHHELNPMRVLLKIAKSDPPTLLTPSKWSVEFRDFLKIALDKNPETRPSAAQLLQHPFVSRVTSNKALRELVAEAKAEVMEEIEDGREDGEEEDAVDAVPPLVNHTQDSANVTQPSLDSNKLLQDSSTPLPPSQPQEPVSGSCSQPSGDGPLQTTSPADGLSKNDNDLKVPVPLRKSRPLSMDARIQMDEEKQIPDQDENPSPAASKSQKANQSRPNSSALETLGGEALTNGGLELPSSVTPSHSKRASDCSNLSTSESMDYGTSLSADLSLNKETGSLSLKGSKLHNKTLKRTRRFVVDGVEVSITTSKIISEDEKKDEEMRFLRRQELRELRLLQKEEHRNQTQLSSKHELQLEQMHKRFEQEINAKKKFYDVELENLERQQKQQVEKMEQDHSVRRKEEAKRIRLEQDRDYAKFQEQLKQMKKEVKSEVEKLPRQQRKESMKQKMEEHSQKKQRLDRDFVAKQKEDLELAMRKLTTENRREICDKERDCLSKKQELLRDREAALWEMEEHQLQERHQLVKQQLKDQYFLQRHDLLRKHEKEREQMQRYNQRMMEQLKVRQQQEKARLPKIQRSDGKTRMAMYKKSLHINGAGSASEQREKIKQFSQQEEKRQKAERLQQQQKHENQMRDMVAQCESNMSELQQLQNEKCHLLVEHETQKLKALDESHNQSLKEWRDKLRPRKKALEEDLNQKKREQEMFFKLSEEAEPRPTTPSKASNFFPYSSGDAS.

2 positions are modified to phosphoserine: serine 13 and serine 20. Residues 36–294 form the Protein kinase domain; sequence WEIVGELGDG…AAQLLQHPFV (259 aa). ATP is bound by residues 42-50 and lysine 65; that span reads LGDGAFGKV. The Proton acceptor role is filled by aspartate 157. The interval 175-224 is activation segment; sequence DFGVSAKNLKTLQKRDSFIGTPYWMAPEVVLCETMKDAPYDYKADIWSLG. Threonine 185 carries the phosphothreonine; by autocatalysis modification. Serine 191 carries the post-translational modification Phosphoserine. Composition is skewed to polar residues over residues 341–363 and 371–392; these read TQDSANVTQPSLDSNKLLQDSST and QEPVSGSCSQPSGDGPLQTTSP. The tract at residues 341 to 497 is disordered; sequence TQDSANVTQP…NLSTSESMDY (157 aa). Residues 421–430 show a composition bias toward basic and acidic residues; that stretch reads IQMDEEKQIP. A phosphoserine mark is found at serine 437, serine 449, serine 453, and serine 484. The segment covering 438 to 456 has biased composition (polar residues); the sequence is PAASKSQKANQSRPNSSAL. The span at 485 to 497 shows a compositional bias: polar residues; it reads DCSNLSTSESMDY. 2 positions are modified to phosphoserine: serine 513 and serine 548. A coiled-coil region spans residues 588-936; sequence LQLEQMHKRF…LNQKKREQEM (349 aa). 3 disordered regions span residues 660 to 692, 826 to 865, and 901 to 966; these read KKEVKSEVEKLPRQQRKESMKQKMEEHSQKKQR, INGAGSASEQREKIKQFSQQEEKRQKAERLQQQQKHENQM, and LDES…GDAS. Composition is skewed to basic and acidic residues over residues 834–865 and 901–946; these read EQREKIKQFSQQEEKRQKAERLQQQQKHENQM and LDES…EAEP. Residue threonine 950 is modified to Phosphothreonine. A compositionally biased stretch (polar residues) spans 950–966; the sequence is TPSKASNFFPYSSGDAS.

The protein belongs to the protein kinase superfamily. STE Ser/Thr protein kinase family. STE20 subfamily. Homodimer; homodimerization is required for activation segment autophosphorylation. In terms of processing, autophosphorylates following homodimerization, leading to activation of the protein. In terms of tissue distribution, expressed predominantly in lymphoid organs such as spleen, thymus, and bone marrow.

It localises to the cell membrane. It carries out the reaction L-seryl-[protein] + ATP = O-phospho-L-seryl-[protein] + ADP + H(+). The catalysed reaction is L-threonyl-[protein] + ATP = O-phospho-L-threonyl-[protein] + ADP + H(+). Inhibited by the pyrrole-indolinone inhibitor SU11274 (K00593): intercalates between the ATP-binding Lys-65 and alpha-C glutamate (Glu-81), resulting in a partial disordering of the lysine side chain. Also specifically inhibited by erlotinib. Slightly inhibited by gefitinib. In terms of biological role, serine/threonine-protein kinase involved in regulation of lymphocyte migration. Phosphorylates MSN, and possibly PLK1. Involved in regulation of lymphocyte migration by mediating phosphorylation of ERM proteins such as MSN. Acts as a negative regulator of MAP3K1/MEKK1. May also act as a cell cycle regulator by acting as a polo kinase kinase: mediates phosphorylation of PLK1 in vitro; however such data require additional evidences in vivo. The chain is Serine/threonine-protein kinase 10 (Stk10) from Mus musculus (Mouse).